The primary structure comprises 444 residues: MRGVIPNYHHSYTLLFFVILVLFPHVFSTNTLSPNEALTISSNKTLVSPGDVFELGFFKTTTRNSPDGTDRWYLGIWYKTTSGHRTYVWVANRDNALHNSMGTLKISHASLVLLDHSNTPVWSTNFTGVAHLPVTAELLANGNFVLRDSKTTALDRFMWQSFDYPVDTLLPEMKLGRNRNGSGNEKILTSWKSPTDPSSGDYSFILETEGFLHEFYLLNNEFKVYRTGPWNGVRFNGIPKMQNWSYIDNSFIDNNKEVAYSFQVNNNHNIHTRFRMSSTGYLQVITWTKTVPQRNMFWSFPEDTCDLYKVCGPYAYCDMHTSPTCNCIKGFVPKNAGRWDLRDMSGGCVRSSKLSCGEGDGFLRMSQMKLPETSEAVVDKRIGLKECREKCVRDCNCTGYANMDIMNGGSGCVMWTGELDDMRKYNAGGQDLYLKVAAASLVPS.

The first 28 residues, 1–28 (MRGVIPNYHHSYTLLFFVILVLFPHVFS), serve as a signal peptide directing secretion. In terms of domain architecture, Bulb-type lectin spans 31 to 159 (TLSPNEALTI…KTTALDRFMW (129 aa)). Asn-43, Asn-125, Asn-180, Asn-243, and Asn-396 each carry an N-linked (GlcNAc...) asparagine glycan. Residues 356-437 (CGEGDGFLRM…GGQDLYLKVA (82 aa)) enclose the PAN domain. Intrachain disulfides connect Cys-387-Cys-412 and Cys-395-Cys-397.

Stigma.

Functionally, involved in sporophytic self-incompatibility system (the inability of flowering plants to achieve self-fertilization). The chain is S-locus-specific glycoprotein BS29-1 (SLSG) from Brassica oleracea var. alboglabra (Chinese kale).